Consider the following 258-residue polypeptide: Hydroxyethylthiazole kinase (258 aa).

Methionine 37 serves as a coordination point for substrate. Positions 112 and 158 each coordinate ATP. Substrate is bound at residue alanine 185.

Belongs to the Thz kinase family. Mg(2+) serves as cofactor.

The catalysed reaction is 5-(2-hydroxyethyl)-4-methylthiazole + ATP = 4-methyl-5-(2-phosphooxyethyl)-thiazole + ADP + H(+). It participates in cofactor biosynthesis; thiamine diphosphate biosynthesis; 4-methyl-5-(2-phosphoethyl)-thiazole from 5-(2-hydroxyethyl)-4-methylthiazole: step 1/1. In terms of biological role, catalyzes the phosphorylation of the hydroxyl group of 4-methyl-5-beta-hydroxyethylthiazole (THZ). The protein is Hydroxyethylthiazole kinase of Rhizobium etli (strain CIAT 652).